Here is a 197-residue protein sequence, read N- to C-terminus: Predicted GPI-anchored protein 34 (197 aa).

The N-terminal stretch at 1–20 (MKFTSLICSSILLIIPTVMA) is a signal peptide. N-linked (GlcNAc...) asparagine glycosylation is found at N110, N114, and N152. G169 carries the GPI-anchor amidated glycine lipid modification. A propeptide spans 170-197 (AAAMAGPVPILTNSIFTAGLLALAAVLL) (removed in mature form).

It is found in the cell membrane. Predicted GPI-anchored protein which may have a role during host infection. In Candida albicans (strain SC5314 / ATCC MYA-2876) (Yeast), this protein is Predicted GPI-anchored protein 34 (PGA34).